The following is a 387-amino-acid chain: Succinate--CoA ligase [ADP-forming] subunit beta (387 aa).

The ATP-grasp domain occupies 9–244 (KQLFASYGLP…VSQEDDRENR (236 aa)). Residues lysine 46, 53 to 55 (GRG), glutamate 99, cysteine 102, and glutamate 107 each bind ATP. Positions 199 and 213 each coordinate Mg(2+). Substrate contacts are provided by residues asparagine 264 and 321–323 (GIV).

This sequence belongs to the succinate/malate CoA ligase beta subunit family. Heterotetramer of two alpha and two beta subunits. Mg(2+) is required as a cofactor.

The catalysed reaction is succinate + ATP + CoA = succinyl-CoA + ADP + phosphate. It catalyses the reaction GTP + succinate + CoA = succinyl-CoA + GDP + phosphate. It functions in the pathway carbohydrate metabolism; tricarboxylic acid cycle; succinate from succinyl-CoA (ligase route): step 1/1. In terms of biological role, succinyl-CoA synthetase functions in the citric acid cycle (TCA), coupling the hydrolysis of succinyl-CoA to the synthesis of either ATP or GTP and thus represents the only step of substrate-level phosphorylation in the TCA. The beta subunit provides nucleotide specificity of the enzyme and binds the substrate succinate, while the binding sites for coenzyme A and phosphate are found in the alpha subunit. In Legionella pneumophila (strain Corby), this protein is Succinate--CoA ligase [ADP-forming] subunit beta.